Consider the following 248-residue polypeptide: E3 SUMO-protein ligase NSE2 (248 aa).

Methionine 1 is modified (N-acetylmethionine). Residues lysine 92 and lysine 109 each participate in a glycyl lysine isopeptide (Lys-Gly) (interchain with G-Cter in SUMO2) cross-link. Serine 118 is subject to Phosphoserine. Glycyl lysine isopeptide (Lys-Gly) (interchain with G-Cter in SUMO2) cross-links involve residues lysine 127 and lysine 132. The SP-RING-type zinc finger occupies 156–242 (VDEDMIVTQS…LRRAIESHKK (87 aa)). Cysteine 187, histidine 189, cysteine 212, and cysteine 217 together coordinate Zn(2+).

The protein belongs to the NSE2 family. In terms of assembly, component of the SMC5-SMC6 complex which consists at least of SMC5, SMC6, NSMCE2, NSMCE1, NSMCE4A or EID3 and NSMCE3. Sumoylated, possibly via autosumoylation.

The protein localises to the nucleus. It localises to the chromosome. Its subcellular location is the telomere. The protein resides in the PML body. It participates in protein modification; protein sumoylation. Functionally, E3 SUMO-protein ligase component of the SMC5-SMC6 complex, a complex involved in DNA double-strand break repair by homologous recombination. Is not be required for the stability of the complex. The complex may promote sister chromatid homologous recombination by recruiting the SMC1-SMC3 cohesin complex to double-strand breaks. Acts as an E3 ligase mediating SUMO attachment to various proteins such as SMC6L1 and TSNAX, the shelterin complex subunits TERF1, TERF2, TINF2 and TERF2IP, RAD51AP1, and maybe the cohesin components RAD21 and STAG2. Required for recruitment of telomeres to PML nuclear bodies. Required for sister chromatid cohesion during prometaphase and mitotic progression. The protein is E3 SUMO-protein ligase NSE2 (NSMCE2) of Bos taurus (Bovine).